Consider the following 369-residue polypeptide: Anhydro-N-acetylmuramic acid kinase (369 aa).

12-19 (GTSLDGVD) contacts ATP.

It belongs to the anhydro-N-acetylmuramic acid kinase family.

It catalyses the reaction 1,6-anhydro-N-acetyl-beta-muramate + ATP + H2O = N-acetyl-D-muramate 6-phosphate + ADP + H(+). It participates in amino-sugar metabolism; 1,6-anhydro-N-acetylmuramate degradation. Its pathway is cell wall biogenesis; peptidoglycan recycling. Catalyzes the specific phosphorylation of 1,6-anhydro-N-acetylmuramic acid (anhMurNAc) with the simultaneous cleavage of the 1,6-anhydro ring, generating MurNAc-6-P. Is required for the utilization of anhMurNAc either imported from the medium or derived from its own cell wall murein, and thus plays a role in cell wall recycling. The polypeptide is Anhydro-N-acetylmuramic acid kinase (Escherichia coli (strain SE11)).